A 237-amino-acid chain; its full sequence is Chaplin-B (237 aa).

The N-terminal stretch at 1–26 (MRRVTRNGVLAVAASGALAVTMPAYA) is a signal peptide. The Chaplin 1 domain occupies 42–82 (SPGLISGNTVQLPVDVPVDVCGNTVNVVGLLNPAAGNGCAD). Disordered stretches follow at residues 81-127 (ADSG…LSGN) and 148-216 (GIGN…TLAG). A compositionally biased stretch (low complexity) spans 101–115 (GSATEATSGGAAAEG). The Chaplin 2 domain maps to 120-160 (SPGVLSGNGVQLPVHLPVNVSGNSVNVVGIGNPAVGNESTN). Pro residues predominate over residues 169–178 (VRPPAEPEPS). The LPXTG sorting signal signature appears at 202–206 (LAHTG). Thr-205 is modified (pentaglycyl murein peptidoglycan amidated threonine). Positions 206-237 (GTDRTLPTLAGGAALVLGGTVLYRRFRPGSGD) are cleaved as a propeptide — removed by sortase.

It belongs to the chaplin family. Long chaplin subfamily.

The protein localises to the secreted. It is found in the cell wall. In terms of biological role, one of 8 partially redundant surface-active proteins required for efficient formation of aerial mycelium; the short chaplins assemble into a hydrophobic, amyloidal fibrillar surface layer that envelopes and protects aerial hyphae and spores, presumably anchored to the long chaplins. Chaplins have an overlapping function with the surface-active SapB peptide; chaplins are essential on minimal medium while on rich medium both chaplins and SapB are required for efficient aerial hyphae formation. The long chaplins (ChpA, ChpB, ChpC) are not absolutely necessary for short chaplin localization or rodlet formation, but probably play a role in initiating aerial hyphae development. Chaplins are also involved in cell attachment to a hydrophobic surface. The protein is Chaplin-B of Streptomyces coelicolor (strain ATCC BAA-471 / A3(2) / M145).